The primary structure comprises 124 residues: uncharacterized protein (124 aa).

Residues 2 to 22 form a helical membrane-spanning segment; that stretch reads AIIIAIIAAVIVIAALITFNV. The disordered stretch occupies residues 24 to 124; that stretch reads NASPGPEKQE…ALLSMKNKKK (101 aa). Basic and acidic residues-rich tracts occupy residues 30 to 58, 67 to 81, and 89 to 113; these read EKQE…RAAE, DSPK…DDIY, and KHSD…RSYR.

It localises to the membrane. This is an uncharacterized protein from Bacillus subtilis (strain 168).